Consider the following 171-residue polypeptide: S-ribosylhomocysteine lyase (171 aa).

Fe cation contacts are provided by histidine 54, histidine 58, and cysteine 128.

The protein belongs to the LuxS family. Homodimer. Fe cation is required as a cofactor.

It catalyses the reaction S-(5-deoxy-D-ribos-5-yl)-L-homocysteine = (S)-4,5-dihydroxypentane-2,3-dione + L-homocysteine. Involved in the synthesis of autoinducer 2 (AI-2) which is secreted by bacteria and is used to communicate both the cell density and the metabolic potential of the environment. The regulation of gene expression in response to changes in cell density is called quorum sensing. Catalyzes the transformation of S-ribosylhomocysteine (RHC) to homocysteine (HC) and 4,5-dihydroxy-2,3-pentadione (DPD). This chain is S-ribosylhomocysteine lyase, found in Edwardsiella ictaluri (strain 93-146).